Consider the following 21-residue polypeptide: Paulistine (21 aa).

The cysteines at positions 7 and 14 are disulfide-linked. Threonine 21 is modified (threonine amide).

Belongs to the sylv/frat/paul family. Occurs in oxidized and reduced states which are thought to adopt a compact globular and linear structure, respectively.

In terms of biological role, induces transient hyperalgesia and paw edema in mice. Probably exerts its effects via different pathways in an oxidation state-dependent way. The protein is Paulistine of Polybia paulista (Neotropical social wasp).